The chain runs to 156 residues: MSWSKVKYFFFDTPEEKEAAQYAYEKEQIEMKKQQEPPEQQDVPFTKVQPKQNVVSIETAKQSSKVVLLEPRTYSEAQGIADHLKGKRAVVINLQRMSTDQAVRIVDFLSGTVYAIGGDIQKLGPKTFMCTPENVDIVGAISELFGEEEETNIKRW.

It belongs to the SepF family. Homodimer. Interacts with FtsZ.

It is found in the cytoplasm. In terms of biological role, cell division protein that is part of the divisome complex and is recruited early to the Z-ring. Probably stimulates Z-ring formation, perhaps through the cross-linking of FtsZ protofilaments. Its function overlaps with FtsA. In Bacillus cytotoxicus (strain DSM 22905 / CIP 110041 / 391-98 / NVH 391-98), this protein is Cell division protein SepF.